Consider the following 526-residue polypeptide: Peptide chain release factor 3 (526 aa).

Positions 11 to 277 (SKRRTFAIIS…SLIKWAPSPL (267 aa)) constitute a tr-type G domain. GTP contacts are provided by residues 20 to 27 (SHPDAGKT), 88 to 92 (DTPGH), and 142 to 145 (NKLD).

Belongs to the TRAFAC class translation factor GTPase superfamily. Classic translation factor GTPase family. PrfC subfamily.

It localises to the cytoplasm. Functionally, increases the formation of ribosomal termination complexes and stimulates activities of RF-1 and RF-2. It binds guanine nucleotides and has strong preference for UGA stop codons. It may interact directly with the ribosome. The stimulation of RF-1 and RF-2 is significantly reduced by GTP and GDP, but not by GMP. The chain is Peptide chain release factor 3 from Buchnera aphidicola subsp. Acyrthosiphon pisum (strain Tuc7).